A 213-amino-acid chain; its full sequence is Small ribosomal subunit protein uS5 (213 aa).

The disordered stretch occupies residues 1-42; the sequence is MSERDRNGGRSADNNRNDRNERGGRNDRGGRNDRRNNQQDER. Residues 45–108 form the S5 DRBM domain; that stretch reads YIERVVTINR…EEARKNFFRV (64 aa).

The protein belongs to the universal ribosomal protein uS5 family. Part of the 30S ribosomal subunit. Contacts proteins S4 and S8.

Functionally, with S4 and S12 plays an important role in translational accuracy. Located at the back of the 30S subunit body where it stabilizes the conformation of the head with respect to the body. This chain is Small ribosomal subunit protein uS5, found in Corynebacterium urealyticum (strain ATCC 43042 / DSM 7109).